Here is a 350-residue protein sequence, read N- to C-terminus: Holliday junction branch migration complex subunit RuvB (350 aa).

Residues 1–183 are large ATPase domain (RuvB-L); it reads MSAERLVNPH…FVAVHRLVFY (183 aa). Residues leucine 22, arginine 23, glycine 64, lysine 67, threonine 68, serine 69, 130–132, arginine 173, tyrosine 183, and arginine 220 contribute to the ATP site; that span reads EDF. Mg(2+) is bound at residue threonine 68. The interval 184–254 is small ATPAse domain (RuvB-S); the sequence is SDDAMTEIVS…VARDALAQLE (71 aa). The head domain (RuvB-H) stretch occupies residues 257–350; it reads ELGLDENDRR…ESGPQQATLF (94 aa). Residues arginine 312 and arginine 317 each contribute to the DNA site. The interval 331 to 350 is disordered; it reads YPERTLPADDESGPQQATLF.

This sequence belongs to the RuvB family. In terms of assembly, homohexamer. Forms an RuvA(8)-RuvB(12)-Holliday junction (HJ) complex. HJ DNA is sandwiched between 2 RuvA tetramers; dsDNA enters through RuvA and exits via RuvB. An RuvB hexamer assembles on each DNA strand where it exits the tetramer. Each RuvB hexamer is contacted by two RuvA subunits (via domain III) on 2 adjacent RuvB subunits; this complex drives branch migration. In the full resolvosome a probable DNA-RuvA(4)-RuvB(12)-RuvC(2) complex forms which resolves the HJ.

The protein resides in the cytoplasm. It catalyses the reaction ATP + H2O = ADP + phosphate + H(+). Functionally, the RuvA-RuvB-RuvC complex processes Holliday junction (HJ) DNA during genetic recombination and DNA repair, while the RuvA-RuvB complex plays an important role in the rescue of blocked DNA replication forks via replication fork reversal (RFR). RuvA specifically binds to HJ cruciform DNA, conferring on it an open structure. The RuvB hexamer acts as an ATP-dependent pump, pulling dsDNA into and through the RuvAB complex. RuvB forms 2 homohexamers on either side of HJ DNA bound by 1 or 2 RuvA tetramers; 4 subunits per hexamer contact DNA at a time. Coordinated motions by a converter formed by DNA-disengaged RuvB subunits stimulates ATP hydrolysis and nucleotide exchange. Immobilization of the converter enables RuvB to convert the ATP-contained energy into a lever motion, pulling 2 nucleotides of DNA out of the RuvA tetramer per ATP hydrolyzed, thus driving DNA branch migration. The RuvB motors rotate together with the DNA substrate, which together with the progressing nucleotide cycle form the mechanistic basis for DNA recombination by continuous HJ branch migration. Branch migration allows RuvC to scan DNA until it finds its consensus sequence, where it cleaves and resolves cruciform DNA. In Chloroflexus aurantiacus (strain ATCC 29366 / DSM 635 / J-10-fl), this protein is Holliday junction branch migration complex subunit RuvB.